A 512-amino-acid polypeptide reads, in one-letter code: Sucrose-6-phosphate hydrolase (512 aa).

Residues 40–43, glutamine 59, tryptophan 67, 102–103, 165–166, glutamate 229, and tryptophan 311 each bind substrate; these read WMND, FS, and RD. Residue aspartate 43 is part of the active site.

This sequence belongs to the glycosyl hydrolase 32 family.

Its subcellular location is the cytoplasm. The catalysed reaction is Hydrolysis of terminal non-reducing beta-D-fructofuranoside residues in beta-D-fructofuranosides.. It functions in the pathway glycan biosynthesis; sucrose metabolism. This is Sucrose-6-phosphate hydrolase (sacA) from Zymomonas mobilis subsp. mobilis (strain ATCC 31821 / ZM4 / CP4).